We begin with the raw amino-acid sequence, 630 residues long: MTDTNHSSMRQHSLQSLAIAAIGVVFGDIGTSPLYSLKEAFSPAHGIPLTPSAILGVISLLFWAIILVVGIKYVLFVMRADNNGEGGVLALMALSLRPLNPKSRITGLMMALGIFGACMFYGDAVITPAISVMSAVEGLEVATPQLSHLVLPITIVILIALFWIQRHGTATVGKLFGPIMVLWFVTIAVLGIYHIARAPMIVSAINPYYAFSFMSEHVLLAYVVLGSVVLVLTGAEALYADMGHFGAKPIRLAAYVLVMPSLVLNYFGQGALLLLDPKAIENPFFLLAPQWAALPLVVLSTVATVIASQAVISGAYSLTSQAIQLGYVPRMKILHTSELAIGQIYVPVVNWLLLFVILCIVIGFKSSDNLAAAYGIAVTATMVITTILAAVVMVKVWNWNKLLVAMIIGVFLVIDLGFFGANLLKVEQGGWLPLGIGALLFFLLMTWYKGRHIVKERTAADGIPLAPFLQGLLAHPPHRVSGTAIYLTGNDTLVPVSLLHNLKHNKVLHERTIFMTFVTRDIPYVKDHERVTVHDAGEGLYIVKAEYGFNETPDVKAVLEEVARQRGMTFELMDTSFFLARETVVPTHLPGMSIWRERVFAWMHQNAAKPTDFFAIPANRVVELGTKIEI.

A run of 12 helical transmembrane segments spans residues 17 to 37 (LAIA…LYSL), 51 to 71 (PSAI…VVGI), 105 to 125 (ITGL…GDAV), 144 to 164 (PQLS…LFWI), 175 to 195 (LFGP…IYHI), 218 to 238 (VLLA…AEAL), 255 to 275 (YVLV…LLLL), 283 to 303 (PFFL…STVA), 344 to 364 (IYVP…VIGF), 374 to 394 (YGIA…VVMV), 402 to 422 (LLVA…FGAN), and 428 to 448 (QGGW…MTWY).

Belongs to the HAK/KUP transporter (TC 2.A.72) family.

The protein resides in the cell inner membrane. It carries out the reaction K(+)(in) + H(+)(in) = K(+)(out) + H(+)(out). Functionally, transport of potassium into the cell. Likely operates as a K(+):H(+) symporter. In Burkholderia pseudomallei (strain K96243), this protein is Probable potassium transport system protein Kup.